A 143-amino-acid polypeptide reads, in one-letter code: Sirohydrochlorin cobaltochelatase (143 aa).

H18 functions as the Proton acceptor in the catalytic mechanism. H18 provides a ligand contact to Co(2+). H18 lines the Ni(2+) pocket. Residues R53 and 78–83 (LAHGVH) each bind substrate. Residue H83 coordinates Co(2+). H83 is a binding site for Ni(2+).

This sequence belongs to the CbiX family. CbiXS subfamily. Homotetramer; dimer of dimers.

The enzyme catalyses Co-sirohydrochlorin + 2 H(+) = sirohydrochlorin + Co(2+). The catalysed reaction is Ni-sirohydrochlorin + 2 H(+) = sirohydrochlorin + Ni(2+). It participates in cofactor biosynthesis; adenosylcobalamin biosynthesis; cob(II)yrinate a,c-diamide from sirohydrochlorin (anaerobic route): step 1/10. In terms of biological role, catalyzes the insertion of Co(2+) into sirohydrochlorin as part of the anaerobic pathway to cobalamin biosynthesis. Involved in the biosynthesis of the unique nickel-containing tetrapyrrole coenzyme F430, the prosthetic group of methyl-coenzyme M reductase (MCR), which plays a key role in methanogenesis and anaerobic methane oxidation (Potential). Catalyzes the insertion of Ni(2+) into sirohydrochlorin to yield Ni-sirohydrochlorin (Potential). This is Sirohydrochlorin cobaltochelatase from Methanothermobacter thermautotrophicus (strain ATCC 29096 / DSM 1053 / JCM 10044 / NBRC 100330 / Delta H) (Methanobacterium thermoautotrophicum).